A 254-amino-acid chain; its full sequence is Alcohol dehydrogenase (254 aa).

10 to 33 (FVAGLGGIGLDTSRELVKRNLKNL) lines the NAD(+) pocket. Ser138 provides a ligand contact to substrate. Tyr151 serves as the catalytic Proton acceptor.

The protein belongs to the short-chain dehydrogenases/reductases (SDR) family. Homodimer.

It carries out the reaction a primary alcohol + NAD(+) = an aldehyde + NADH + H(+). The catalysed reaction is a secondary alcohol + NAD(+) = a ketone + NADH + H(+). The chain is Alcohol dehydrogenase (Adh) from Drosophila pseudoobscura pseudoobscura (Fruit fly).